We begin with the raw amino-acid sequence, 84 residues long: Turripeptide IX-03 (84 aa).

Residues 1–21 form the signal peptide; the sequence is MGFYMLLTVALLLTSLMNVEA. A propeptide spanning residues 22–39 is cleaved from the precursor; sequence TPVDQAERSALEKSGLGN. Cystine bridges form between C48-C70, C55-C74, and C60-C81.

As to expression, expressed by the venom duct.

It is found in the secreted. The polypeptide is Turripeptide IX-03 (Gemmula speciosa (Splendid gem-turris)).